The primary structure comprises 211 residues: Proteasome subunit beta (211 aa).

The propeptide at methionine 1–glycine 8 is removed in mature form; by autocatalysis. Threonine 9 serves as the catalytic Nucleophile.

This sequence belongs to the peptidase T1B family. As to quaternary structure, the 20S proteasome core is composed of 14 alpha and 14 beta subunits that assemble into four stacked heptameric rings, resulting in a barrel-shaped structure. The two inner rings, each composed of seven catalytic beta subunits, are sandwiched by two outer rings, each composed of seven alpha subunits. The catalytic chamber with the active sites is on the inside of the barrel. Has a gated structure, the ends of the cylinder being occluded by the N-termini of the alpha-subunits. Is capped at one or both ends by the proteasome regulatory ATPase, PAN.

It is found in the cytoplasm. It catalyses the reaction Cleavage of peptide bonds with very broad specificity.. The formation of the proteasomal ATPase PAN-20S proteasome complex, via the docking of the C-termini of PAN into the intersubunit pockets in the alpha-rings, triggers opening of the gate for substrate entry. Interconversion between the open-gate and close-gate conformations leads to a dynamic regulation of the 20S proteasome proteolysis activity. Functionally, component of the proteasome core, a large protease complex with broad specificity involved in protein degradation. The T.acidophilum proteasome is able to cleave oligopeptides after Tyr, Leu, Phe, and to a lesser extent after Glu and Arg. Thus, displays chymotrypsin-like activity and low level of caspase-like and trypsin-like activities. The polypeptide is Proteasome subunit beta (Thermoplasma acidophilum (strain ATCC 25905 / DSM 1728 / JCM 9062 / NBRC 15155 / AMRC-C165)).